A 286-amino-acid polypeptide reads, in one-letter code: Hydroxysteroid 11-beta-dehydrogenase 1-like protein (286 aa).

The N-terminal stretch at 1 to 17 (MGIHIKRWCFIILVASA) is a signal peptide. Residues 39–65 (GAST…TARR), 90–91 (DM), and 117–119 (NHI) contribute to the NADP(+) site. Position 168 (serine 168) interacts with substrate. The Proton acceptor role is filled by tyrosine 181. NADP(+) is bound by residues 181 to 185 (YAASK) and 214 to 220 (GLIDTQS).

This sequence belongs to the short-chain dehydrogenases/reductases (SDR) family.

It is found in the secreted. The catalysed reaction is cortisone + NADPH + H(+) = cortisol + NADP(+). Unidirectional NADP(+)-dependent cortisol dehydrogenase (in vitro). This Xenopus tropicalis (Western clawed frog) protein is Hydroxysteroid 11-beta-dehydrogenase 1-like protein (hsd11b1l).